The sequence spans 241 residues: Fatty acid metabolism regulator protein (241 aa).

In terms of domain architecture, HTH gntR-type spans Gln11 to Ile79. Positions Glu39–Gln58 form a DNA-binding region, H-T-H motif.

In terms of assembly, homodimer.

The protein resides in the cytoplasm. In terms of biological role, multifunctional regulator of fatty acid metabolism. This Pasteurella multocida (strain Pm70) protein is Fatty acid metabolism regulator protein.